The following is a 424-amino-acid chain: CinA-like protein (424 aa).

This sequence belongs to the CinA family.

The protein is CinA-like protein of Shewanella piezotolerans (strain WP3 / JCM 13877).